The following is a 148-amino-acid chain: MGPEKSTAMTETSAAVRIQAWWRGTLLRRTLLHAALSAWIIQCWWRKIMIMLQGKKRRMALELYARKTWAIVKLQSWFRMWHIRHRYCRLLNAVRIIQVYWRWHSCHTRGFIQGNYEIKENRLNIQLEISLGSQACKVEQCITLPIKE.

2 IQ domains span residues 11–40 (ETSA…SAWI) and 67–96 (KTWA…AVRI).

In Mus musculus (Mouse), this protein is IQ domain-containing protein F5 (Iqcf5).